Reading from the N-terminus, the 398-residue chain is Proteasome-activating nucleotidase (398 aa).

The stretch at 18–59 (IMYLKKRIRQLELQVRTLEADKERLERELSRLRMEMSRLRQP) forms a coiled coil. ATP-binding positions include 183 to 188 (GCGKTL) and His322. Positions 396 to 398 (MYG) are docks into pockets in the proteasome alpha-ring to cause gate opening.

The protein belongs to the AAA ATPase family. As to quaternary structure, homohexamer. The hexameric complex has a two-ring architecture resembling a top hat that caps the 20S proteasome core at one or both ends. Upon ATP-binding, the C-terminus of PAN interacts with the alpha-rings of the proteasome core by binding to the intersubunit pockets.

The protein localises to the cytoplasm. Functionally, ATPase which is responsible for recognizing, binding, unfolding and translocation of substrate proteins into the archaeal 20S proteasome core particle. Is essential for opening the gate of the 20S proteasome via an interaction with its C-terminus, thereby allowing substrate entry and access to the site of proteolysis. Thus, the C-termini of the proteasomal ATPase function like a 'key in a lock' to induce gate opening and therefore regulate proteolysis. Unfolding activity requires energy from ATP hydrolysis, whereas ATP binding alone promotes ATPase-20S proteasome association which triggers gate opening, and supports translocation of unfolded substrates. The polypeptide is Proteasome-activating nucleotidase (Thermococcus onnurineus (strain NA1)).